The sequence spans 419 residues: Serine hydroxymethyltransferase (419 aa).

Residues Leu119 and 123-125 each bind (6S)-5,6,7,8-tetrahydrofolate; that span reads GHL. Residue Lys228 is modified to N6-(pyridoxal phosphate)lysine.

This sequence belongs to the SHMT family. Homodimer. The cofactor is pyridoxal 5'-phosphate.

It is found in the cytoplasm. The enzyme catalyses (6R)-5,10-methylene-5,6,7,8-tetrahydrofolate + glycine + H2O = (6S)-5,6,7,8-tetrahydrofolate + L-serine. It functions in the pathway one-carbon metabolism; tetrahydrofolate interconversion. Its pathway is amino-acid biosynthesis; glycine biosynthesis; glycine from L-serine: step 1/1. Its function is as follows. Catalyzes the reversible interconversion of serine and glycine with tetrahydrofolate (THF) serving as the one-carbon carrier. This reaction serves as the major source of one-carbon groups required for the biosynthesis of purines, thymidylate, methionine, and other important biomolecules. Also exhibits THF-independent aldolase activity toward beta-hydroxyamino acids, producing glycine and aldehydes, via a retro-aldol mechanism. The polypeptide is Serine hydroxymethyltransferase (Desulfosudis oleivorans (strain DSM 6200 / JCM 39069 / Hxd3) (Desulfococcus oleovorans)).